Consider the following 800-residue polypeptide: Nuclear cap-binding protein subunit 1 (800 aa).

Positions 1–26 (MSRRRAHDTEDEGYDHRRNKRRRVSE) are disordered. Residue Thr-9 is modified to Phosphothreonine. The region spanning 31-243 (EDRLESLILR…CLWAQIRKLR (213 aa)) is the MIF4G domain. The interval 669 to 700 (LAKADSSSSDSEDDSSHKRKKPITHADKPSEE) is disordered.

This sequence belongs to the NCBP1 family. In terms of assembly, component of the nuclear cap-binding complex (CBC), a heterodimer composed of Cbp80 and Cbp20 that interacts with m7GpppG-capped RNA.

It localises to the nucleus. In terms of biological role, component of the cap-binding complex (CBC), which binds cotranscriptionally to the 5'-cap of pre-mRNAs and is involved in various processes such as pre-mRNA splicing and RNA-mediated gene silencing (RNAi). The CBC complex is involved in miRNA-mediated RNA interference via its interaction with Ars2 and is required for primary microRNAs (miRNAs) processing. Also involved in innate immunity via the short interfering RNAs (siRNAs) processing machinery by restricting the viral RNA production. In the CBC complex, Cbp80 does not bind directly capped RNAs (m7GpppG-capped RNA) but is required to stabilize the movement of the N-terminal loop of Cbp20 and lock the CBC into a high affinity cap-binding state with the cap structure. The polypeptide is Nuclear cap-binding protein subunit 1 (Cbp80) (Drosophila yakuba (Fruit fly)).